The following is a 1085-amino-acid chain: MPHFTVVPVDGPRRGDYDNLEGLSWVDYGERAEREDSDGQGNHRENSPFLCPLDASRGNDYYDRNLALFEEELDIRPKVSSLLGKLVSYTNLTQGAKEHEEAESGEGGRRRAAKAPSMGTLMGVYLPCLQNIFGVILFLRLTWMVGTAGVLQALLIVLICCCCTLLTAISMSAIATNGVVPAGGSYFMISRSLGPEFGGAVGLCFYLGTTFAAAMYILGAIEILLTYIAPPAAIFYPSGTHDMSSATLNNMRVYGTIFLTLMTLVVFVGVKYVNKFASLFLACVIISILSIYAGGIKSIFDPPVFPVCMLGNRTLSRDQFDICAKTVVVDNETVATRLWTFFCHSPNLTADSCDPYFLLNNVTEIPGIPGAAAGVLQENLWSAYLEKGEVVEKHGLPSTDTLGLKESLSLYVVADIATSFTVLVGIFFPSVTGIMAGSNRSGDLRDAQKSIPVGTILAIVTTSLVYFSSVILFGACIEGVVLRDKYGDGVSRNLVVGTLAWPSPWVIVVGSFFSTCGAGLQSLTGAPRLLQAIAKDNIIPFLRVFGHGKANGEPTWALLLTALIAELGILIASLDMVAPILSMFFLMCYLFVNLACAVQTLLRTPNWRPRFKYYHWTLSFLGMSLCLALMFVSSWYYALVAMLIAGMIYKYIEYQGAEKEWGDGIRGLSLSAARYALLRLEEGPPHTKNWRPQLLVLLKLDEDLHVKYPRLLTFASQLKAGKGLTIVGSVIQGSFLESYGEAQAAEQTIKNMMDIEKVKGFCQVVVASKVREGLAHLIQSCGLGGMRHNSVVLGWPYGWRQSEDPRAWKTFIDTVRCTTAAHLALLVPKNIAFYPSNHERYLDGHIDVWWIVHDGGMLMLLPFLLRQHKVWKKCRMRIFTVAQMDDNSIQMKKDLAIFLYHLRLEAEVEVVEMHNSDISAYTYERTLMMEQRSQMLRQMRLTKTERDREAQLVKDRHSALRLESLYSDEEEESVAGADKIQMTWTRDKYMAEPWDPSHAPDNFRELVHIKPDQSNVRRMHTAVKLNEVIVTRSHDARLVLLNMPGPPKNSEGDENYMEFLEVLTEGLERVLLVRGGGREVITIYS.

Topologically, residues 1-119 are cytoplasmic; the sequence is MPHFTVVPVD…RRAAKAPSMG (119 aa). Ser-24, Ser-47, Ser-81, and Ser-88 each carry phosphoserine. The chain crosses the membrane as a discontinuously helical span at residues 120 to 141; it reads TLMGVYLPCLQNIFGVILFLRL. K(+) contacts are provided by Asn-131 and Ile-132. Residues 142 to 149 lie on the Extracellular side of the membrane; it reads TWMVGTAG. A helical membrane pass occupies residues 150–172; the sequence is VLQALLIVLICCCCTLLTAISMS. Residues 173–196 are Cytoplasmic-facing; that stretch reads AIATNGVVPAGGSYFMISRSLGPE. A helical membrane pass occupies residues 197-225; sequence FGGAVGLCFYLGTTFAAAMYILGAIEILL. Residue Tyr-216 coordinates K(+). Residues 226-248 are Extracellular-facing; the sequence is TYIAPPAAIFYPSGTHDMSSATL. 2 helical membrane-spanning segments follow: residues 249-271 and 272-297; these read NNMR…VGVK and YVNK…GGIK. Topologically, residues 298–419 are extracellular; sequence SIFDPPVFPV…LYVVADIATS (122 aa). Cys-308 and Cys-323 are oxidised to a cystine. 3 N-linked (GlcNAc...) asparagine glycosylation sites follow: Asn-312, Asn-331, and Asn-347. Cys-343 and Cys-353 are disulfide-bonded. Residues 420-440 traverse the membrane as a helical segment; sequence FTVLVGIFFPSVTGIMAGSNR. K(+) is bound by residues Pro-429 and Thr-432. Chloride is bound by residues Gly-433, Ile-434, and Met-435. Residues 441–450 lie on the Cytoplasmic side of the membrane; sequence SGDLRDAQKS. Residues 451–473 form a helical membrane-spanning segment; sequence IPVGTILAIVTTSLVYFSSVILF. Over 474-504 the chain is Extracellular; sequence GACIEGVVLRDKYGDGVSRNLVVGTLAWPSP. A helical transmembrane segment spans residues 505–531; sequence WVIVVGSFFSTCGAGLQSLTGAPRLLQ. Topologically, residues 532–554 are cytoplasmic; that stretch reads AIAKDNIIPFLRVFGHGKANGEP. 2 consecutive transmembrane segments (helical) span residues 555 to 575 and 576 to 598; these read TWAL…ASLD and MVAP…ACAV. Residue Tyr-589 coordinates chloride. The Cytoplasmic portion of the chain corresponds to 599 to 612; the sequence is QTLLRTPNWRPRFK. A run of 2 helical transmembrane segments spans residues 613 to 635 and 636 to 651; these read YYHW…VSSW and YYAL…IYKY. The Cytoplasmic portion of the chain corresponds to 652–1085; that stretch reads IEYQGAEKEW…GGREVITIYS (434 aa). The scissor helix stretch occupies residues 665 to 681; that stretch reads IRGLSLSAARYALLRLE. ATP-binding residues include Leu-697, Lys-699, Lys-707, Tyr-708, and Val-730. Phosphoserine is present on Ser-734. The ATP site is built by Gly-794, Trp-795, and Tyr-797. A phosphoserine mark is found at Ser-916 and Ser-967. At Thr-983 the chain carries Phosphothreonine. At Ser-1050 the chain carries Phosphoserine.

Belongs to the SLC12A transporter family. K/Cl co-transporter subfamily. Homodimer; adopts a domain-swap conformation at the scissor helices connecting the transmembrane domain and C-terminal domain. Heterodimer with other K-Cl cotransporters. Phosphorylated, phosphorylation may regulate transporter activity. Detected in embryo, adult heart, erythrocytes, brain, kidney, stomach, ovary, testis and liver.

The protein resides in the cell membrane. The catalysed reaction is K(+)(in) + chloride(in) = K(+)(out) + chloride(out). Its activity is regulated as follows. Inhibited by WNK3. Functionally, mediates electroneutral potassium-chloride cotransport when activated by cell swelling. May contribute to cell volume homeostasis in single cells. May be involved in the regulation of basolateral Cl(-) exit in NaCl absorbing epithelia. This chain is Solute carrier family 12 member 4 (Slc12a4), found in Mus musculus (Mouse).